The primary structure comprises 76 residues: Defensin-like protein 125 (76 aa).

Positions 1–25 (MTKAITLAIFMVVLVLGMVTKETQG) are cleaved as a signal peptide. 4 disulfides stabilise this stretch: cysteine 30-cysteine 74, cysteine 41-cysteine 60, cysteine 46-cysteine 68, and cysteine 50-cysteine 70.

It belongs to the DEFL family.

The protein localises to the secreted. The chain is Defensin-like protein 125 (LCR54) from Arabidopsis thaliana (Mouse-ear cress).